Consider the following 260-residue polypeptide: DNA-binding protein RFXANK (260 aa).

Residues Met-1–Gly-79 are disordered. Residues Gly-22–Asp-33 show a composition bias toward acidic residues. The span at Ser-57–Gln-77 shows a compositional bias: polar residues. ANK repeat units follow at residues Leu-89–Asn-118, Arg-123–Ile-152, Glu-156–Ile-185, Asn-189–Thr-218, and Ser-222–Gln-251.

Forms homodimers. The RFX heterotetrameric complex consists of 2 molecules of RFX5 and one each of RFXAP and RFX-B/RFXANK; with each subunit representing a separate complementation group. Interacts (via ankyrin repeats) with RFX5 (via PxLPxI/L motif); the interaction is direct. RFX forms cooperative DNA binding complexes with X2BP and CBF/NF-Y. RFX associates with CIITA to form an active transcriptional complex. Interacts with RAF1. Interacts (via ankyrin repeats) with RFX7 (via PxLPxI/L motif). In terms of processing, phosphorylated by RAF1. Ubiquitous.

The protein localises to the cytoplasm. The protein resides in the nucleus. Functionally, activates transcription from class II MHC promoters. Activation requires the activity of the MHC class II transactivator/CIITA. May regulate other genes in the cell. RFX binds the X1 box of MHC-II promoters. May also potentiate the activation of RAF1. Its function is as follows. Isoform 2 is not involved in the positive regulation of MHC class II genes. This Homo sapiens (Human) protein is DNA-binding protein RFXANK (RFXANK).